A 420-amino-acid chain; its full sequence is Gamma-glutamyl phosphate reductase (420 aa).

The protein belongs to the gamma-glutamyl phosphate reductase family.

The protein localises to the cytoplasm. The catalysed reaction is L-glutamate 5-semialdehyde + phosphate + NADP(+) = L-glutamyl 5-phosphate + NADPH + H(+). The protein operates within amino-acid biosynthesis; L-proline biosynthesis; L-glutamate 5-semialdehyde from L-glutamate: step 2/2. Catalyzes the NADPH-dependent reduction of L-glutamate 5-phosphate into L-glutamate 5-semialdehyde and phosphate. The product spontaneously undergoes cyclization to form 1-pyrroline-5-carboxylate. The protein is Gamma-glutamyl phosphate reductase of Streptococcus pneumoniae (strain CGSP14).